The chain runs to 223 residues: Cytidylate kinase (223 aa).

Gly12–Thr20 contributes to the ATP binding site.

Belongs to the cytidylate kinase family. Type 1 subfamily.

The protein localises to the cytoplasm. The catalysed reaction is CMP + ATP = CDP + ADP. It carries out the reaction dCMP + ATP = dCDP + ADP. This is Cytidylate kinase from Aster yellows witches'-broom phytoplasma (strain AYWB).